Reading from the N-terminus, the 173-residue chain is Transmembrane protein 240 (173 aa).

Transmembrane regions (helical) follow at residues 5–25 (ANTM…ACLM) and 90–110 (LMLG…MDGV). Residue serine 169 is modified to Phosphoserine.

Its subcellular location is the synapse. It is found in the cell membrane. This is Transmembrane protein 240 (Tmem240) from Mus musculus (Mouse).